Here is a 1512-residue protein sequence, read N- to C-terminus: Bifunctional glutamate/proline--tRNA ligase (1512 aa).

Residues 164-759 (GTKWDVSGNR…SSVLYSRVAV (596 aa)) form a glutamate--tRNA ligase region. Positions 204 to 214 (PEASGYLHIGH) match the 'HIGH' region motif. Residues 294–315 (TPAEQMKAEREQRTESKHRKNS) form a disordered region. A compositionally biased stretch (basic and acidic residues) spans 299–308 (MKAEREQRTE). Lys-300 carries the N6-acetyllysine; alternate modification. Lys-300 bears the N6-malonyllysine; alternate mark. Thr-355 carries the phosphothreonine modification. An N6-acetyllysine modification is found at Lys-417. Positions 432–436 (VLSKR) match the 'KMSKS' region motif. At Ser-434 the chain carries Phosphoserine. N6-acetyllysine occurs at positions 498, 535, 542, and 637. Residues 709 to 736 (EMPTSGSKEKTKVEISKKETSSAPKERP) are compositionally biased toward basic and acidic residues. Residues 709–742 (EMPTSGSKEKTKVEISKKETSSAPKERPAPAVSS) form a disordered region. In terms of domain architecture, WHEP-TRS 1 spans 749-805 (DSSVLYSRVAVQGDVVRELKAKKAPKEDIDAAVKQLLTLKAEYKEKTGQEYKPGNPS). The interval 760–956 (QGDVVRELKA…GIEYKPVSAT (197 aa)) is 3 X 57 AA approximate repeats. Lys-788 is modified (N6-acetyllysine). Positions 795–819 (TGQEYKPGNPSAAAVQTVSTKSSSN) are disordered. The span at 808–819 (AVQTVSTKSSSN) shows a compositional bias: polar residues. In terms of domain architecture, WHEP-TRS 2 spans 822–878 (ESTSLYNKVAAQGEVVRKLKAEKAPKAKVTEAVECLLSLKAEYKEKTGKDYVPGQPP). Lys-861 is subject to N6-acetyllysine. Disordered stretches follow at residues 869–898 (GKDY…GAEK) and 956–1011 (TGAE…PKKQ). Residue Tyr-872 is modified to Phosphotyrosine. Polar residues predominate over residues 878–892 (PASQNSHSNPVSNAQ). A Phosphoserine modification is found at Ser-885. The region spanning 900–956 (EAKVLFDRVACQGEVVRKLKAEKASKDQVDSAVQELLQLKAQYKSLTGIEYKPVSAT) is the WHEP-TRS 3 domain. The span at 958–976 (AEDKDKKKKEKENKSEKQN) shows a compositional bias: basic and acidic residues. Residues 997–1006 (LSSGGAGEGQ) are compositionally biased toward gly residues. Ser-998 carries the phosphoserine modification. Ser-999 carries the post-translational modification Phosphoserine; by RPS6KB1. The tract at residues 1007-1512 (GPKKQTRLGL…KFYTLFGRSY (506 aa)) is proline--tRNA ligase. L-proline contacts are provided by residues 1121–1123 (TSE) and Arg-1152. Residues Arg-1152, Glu-1154, Arg-1163, Thr-1164, Gln-1237, and Thr-1240 each coordinate ATP. Residue Arg-1152 is modified to Omega-N-methylarginine. A Mg(2+)-binding site is contributed by Gln-1237. His-1242 is a binding site for L-proline. ATP-binding residues include Thr-1276 and Arg-1278. Ser-1350 bears the Phosphoserine mark. Zn(2+) contacts are provided by Cys-1448, Cys-1453, Cys-1495, and Cys-1497. Position 1503 is an N6-acetyllysine (Lys-1503).

This sequence in the N-terminal section; belongs to the class-I aminoacyl-tRNA synthetase family. Glutamate--tRNA ligase type 2 subfamily. The protein in the C-terminal section; belongs to the class-II aminoacyl-tRNA synthetase family. As to quaternary structure, homodimer. Part of the aminoacyl-tRNA synthetase multienzyme complex, also know as multisynthetase complex, that is composed of the tRNA ligases for Arg (RARS1), Asp (DARS1), Gln (QARS1), Ile (IARS1), Leu (LARS1), Lys (KARS1), Met (MARS1) the bifunctional ligase for Glu and Pro (EPRS1) and the auxiliary subunits AIMP1/p43, AIMP2/p38 and EEF1E1/p18. Forms a linear complex that contains MARS1, EEF1E1, EPRS1 and AIMP2 that is at the core of the multisubunit complex. Interacts with TARS3. Interacts with DUS2L. Component of the GAIT complex which is composed of EPRS1, RPL13A and GAPDH. Interacts (phosphorylated at Ser-999) with SLC27A1; mediates the translocation of SLC27A1 from the cytoplasm to the plasma membrane thereby increasing the uptake of long-chain fatty acids. Post-translationally, phosphorylated at Ser-999 by RPS6KB1; triggers EPRS1 release from the aminoacyl-tRNA synthetase multienzyme complex. In monocytes, the IFN-gamma-induced phosphorylation at Ser-999 releases EPRS1 from the aminoacyl-tRNA synthetase multienzyme complex, allowing its association with the GAIT complex. Phosphorylation at Ser-999 is specifically required for the RPL13A-mediated interaction of the GAIT complex with eIF4G. Phosphorylation at Ser-999 by RPS6KB1, is also induced by insulin through activation of the mTORC1 signaling pathway and promotes the interaction of EPRS1 with SLC27A1.

Its subcellular location is the cytoplasm. The protein resides in the cytosol. The protein localises to the membrane. It carries out the reaction tRNA(Glu) + L-glutamate + ATP = L-glutamyl-tRNA(Glu) + AMP + diphosphate. The catalysed reaction is tRNA(Pro) + L-proline + ATP = L-prolyl-tRNA(Pro) + AMP + diphosphate. Multifunctional protein which primarily functions within the aminoacyl-tRNA synthetase multienzyme complex, also known as multisynthetase complex. Within the complex it catalyzes the attachment of both L-glutamate and L-proline to their cognate tRNAs in a two-step reaction where the amino acid is first activated by ATP to form a covalent intermediate with AMP. Subsequently, the activated amino acid is transferred to the acceptor end of the cognate tRNA to form L-glutamyl-tRNA(Glu) and L-prolyl-tRNA(Pro). Upon interferon-gamma stimulation, EPRS1 undergoes phosphorylation, causing its dissociation from the aminoacyl-tRNA synthetase multienzyme complex. It is recruited to form the GAIT complex, which binds to stem loop-containing GAIT elements found in the 3'-UTR of various inflammatory mRNAs, such as ceruloplasmin. The GAIT complex inhibits the translation of these mRNAs, allowing interferon-gamma to redirect the function of EPRS1 from protein synthesis to translation inhibition in specific cell contexts. Furthermore, it can function as a downstream effector in the mTORC1 signaling pathway, by promoting the translocation of SLC27A1 from the cytoplasm to the plasma membrane where it mediates the uptake of long-chain fatty acid by adipocytes. Thereby, EPRS1 also plays a role in fat metabolism and more indirectly influences lifespan. The polypeptide is Bifunctional glutamate/proline--tRNA ligase (Mus musculus (Mouse)).